The sequence spans 590 residues: Aspartate--tRNA(Asp/Asn) ligase (590 aa).

L-aspartate is bound at residue Glu176. The tract at residues 200 to 203 is aspartate; it reads QLFK. 2 residues coordinate L-aspartate: Arg222 and His451. Residue 222–224 participates in ATP binding; it reads RDE. Residue Glu485 coordinates ATP. Arg492 serves as a coordination point for L-aspartate. An ATP-binding site is contributed by 537–540; that stretch reads GIDR.

This sequence belongs to the class-II aminoacyl-tRNA synthetase family. Type 1 subfamily. In terms of assembly, homodimer.

It is found in the cytoplasm. The enzyme catalyses tRNA(Asx) + L-aspartate + ATP = L-aspartyl-tRNA(Asx) + AMP + diphosphate. Aspartyl-tRNA synthetase with relaxed tRNA specificity since it is able to aspartylate not only its cognate tRNA(Asp) but also tRNA(Asn). Reaction proceeds in two steps: L-aspartate is first activated by ATP to form Asp-AMP and then transferred to the acceptor end of tRNA(Asp/Asn). This chain is Aspartate--tRNA(Asp/Asn) ligase, found in Ehrlichia ruminantium (strain Gardel).